Here is a 155-residue protein sequence, read N- to C-terminus: Small ribosomal subunit protein uS7c (155 aa).

It belongs to the universal ribosomal protein uS7 family. Part of the 30S ribosomal subunit.

It is found in the plastid. It localises to the chloroplast. Its function is as follows. One of the primary rRNA binding proteins, it binds directly to 16S rRNA where it nucleates assembly of the head domain of the 30S subunit. The protein is Small ribosomal subunit protein uS7c (rps7) of Cryptomeria japonica (Japanese cedar).